The sequence spans 468 residues: Putative magnesium transporter MRS2-G (468 aa).

Disordered stretches follow at residues M1–V76 and G183–R204. 2 stretches are compositionally biased toward low complexity: residues A14 to T23 and R31 to S45. Positions P46–A67 are enriched in pro residues. The span at G187 to Q201 shows a compositional bias: basic and acidic residues. The next 2 helical transmembrane spans lie at L402 to A422 and F437 to L457.

The protein belongs to the CorA metal ion transporter (MIT) (TC 1.A.35.5) family. In terms of assembly, interacts with CYCB2-2.

It localises to the membrane. Functionally, putative magnesium transporter. In Oryza sativa subsp. japonica (Rice), this protein is Putative magnesium transporter MRS2-G (MRS2-G).